The sequence spans 368 residues: D-Ala-D/L-Ala epimerase (368 aa).

Residues T135 and 160-162 each bind substrate; that span reads KVK. Mg(2+) is bound by residues D190, E216, and D241. Residues K265 and 318–320 contribute to the substrate site; that span reads DFD.

The protein belongs to the mandelate racemase/muconate lactonizing enzyme family. Requires Mg(2+) as cofactor.

Functionally, catalyzes the epimerization of D-Ala-D-Ala to D-Ala-L-Ala. Has broad substrate specificity and catalyzes the epimerization of a variety of dipeptides containing an N-terminal Ala followed by a hydrophobic or polar residue, such as Val, Ser and Met (in vitro). This is D-Ala-D/L-Ala epimerase (tfdD) from Cytophaga hutchinsonii (strain ATCC 33406 / DSM 1761 / CIP 103989 / NBRC 15051 / NCIMB 9469 / D465).